Reading from the N-terminus, the 438-residue chain is MESQQLHQNPHSLHGSAYASVTSKEVPSNQDPLAVSASNLPEFDRDSTKVNSQQETTPGTSAVPENHHHVSPQPASVPPPQNGQYQQHGMMTPNKAMASNWAHYQQPSMMTCSHYQTSPAYYQPDPHYPLPQYIPPLSTSSPDPIDLKNQHSEIPQAKTKVGNNVLPPHTLTSEENFSTWVKFYIRFLKNSNLGDIIPNDQGEIKRQMTYEEHAYIYNTFQAFAPFHLLPTWVKQILEINYADILTVLCKSVSKMQTNNQELKDWIALANLEYDGSTSADTFEITVSTIIQRLKENNINVSDRLACQLILKGLSGDFKYLRNQYRTKTNMKLSQLFAEIQLIYDENKIMNLNKPSQYKQHSEYKNVSRTSPNTTNTKVTTRNYHRTNSSKPRAAKAHNIATSSKFSRVNNDHINESTVSSQYLSDDDELSLRPATERI.

Composition is skewed to polar residues over residues 1–11 (MESQQLHQNPH), 19–39 (ASVTSKEVPSNQDPLAVSASN), and 49–60 (KVNSQQETTPGT). 3 disordered regions span residues 1–86 (MESQ…GQYQ), 360–403 (HSEY…ATSS), and 418–438 (VSSQYLSDDDELSLRPATERI). The RNA-binding stretch occupies residues 295–397 (ENNINVSDRL…SSKPRAAKAH (103 aa)). Positions 369 to 381 (TSPNTTNTKVTTR) are enriched in low complexity.

In terms of assembly, homotrimer.

The protein localises to the cytoplasm. Capsid protein (CA) is the structural component of the virus-like particle (VLP), forming the shell that encapsulates the retrotransposons dimeric RNA genome. The particles are assembled from trimer-clustered units and there are holes in the capsid shells that allow for the diffusion of macromolecules. CA also has nucleocapsid-like chaperone activity, promoting primer tRNA(i)-Met annealing to the multipartite primer-binding site (PBS), dimerization of Ty2 RNA and initiation of reverse transcription. The protein is Transposon Ty2-GR1 Gag polyprotein (TY2A-GR1) of Saccharomyces cerevisiae (strain ATCC 204508 / S288c) (Baker's yeast).